The primary structure comprises 200 residues: Imidazoleglycerol-phosphate dehydratase (200 aa).

Belongs to the imidazoleglycerol-phosphate dehydratase family.

It localises to the cytoplasm. The catalysed reaction is D-erythro-1-(imidazol-4-yl)glycerol 3-phosphate = 3-(imidazol-4-yl)-2-oxopropyl phosphate + H2O. It participates in amino-acid biosynthesis; L-histidine biosynthesis; L-histidine from 5-phospho-alpha-D-ribose 1-diphosphate: step 6/9. This chain is Imidazoleglycerol-phosphate dehydratase, found in Chlorobium phaeovibrioides (strain DSM 265 / 1930) (Prosthecochloris vibrioformis (strain DSM 265)).